We begin with the raw amino-acid sequence, 868 residues long: Pro-neuregulin-2, membrane-bound isoform (868 aa).

The segment at 1–114 (MRQVCCSALP…AAGGMRRDPA (114 aa)) is disordered. Positions 1–127 (MRQVCCSALP…SMLLFGVSLA (127 aa)) are excised as a propeptide. The span at 19–75 (SSYSYSDSSSSSSSNNSSSSTSSRSSSRSSSRSSRGSTTTTSSSENSGSNSGSIFRP) shows a compositional bias: low complexity. Asn33 and Asn34 each carry an N-linked (GlcNAc...) asparagine glycan. Residues 76 to 90 (AAPPEPRPQPQPQPR) are compositionally biased toward pro residues. A compositionally biased stretch (low complexity) spans 91–108 (SPAARRAAARSRAAAAGG). Over 128–429 (CYSPSLKSVQ…KEAEELYQKR (302 aa)) the chain is Extracellular. Asn163, Asn294, and Asn362 each carry an N-linked (GlcNAc...) asparagine glycan. The Ig-like C2-type domain occupies 253-348 (PKLKKMKSQT…RGRLHVNSVS (96 aa)). 4 disulfide bridges follow: Cys273/Cys327, Cys361/Cys375, Cys369/Cys386, and Cys388/Cys397. The EGF-like domain maps to 357–398 (HARKCNETAKSYCVNGGVCYYIEGINQLSCKCPNGFFGQRCL). The chain crosses the membrane as a helical span at residues 430–450 (VLTITGICVALLVVGIVCVVA). At 451–868 (YCKTKKQRRQ…TRAKQDSGPL (418 aa)) the chain is on the cytoplasmic side. Disordered regions lie at residues 469–488 (MCPA…PRLD), 516–553 (TFSG…SESL), 671–690 (LLRH…DMQR), 720–806 (ASPF…DGAL), and 823–868 (LRSD…SGPL). Low complexity predominate over residues 518-530 (SGSHSCSPSHHCS). The segment covering 538-551 (HRHESHTWSLERSE) has biased composition (basic and acidic residues). Residues 766–794 (LNGLAAQRARAARDSLSLSSGSGCGSASA) show a composition bias toward low complexity.

Belongs to the neuregulin family. In terms of assembly, interacts with ERBB3 and ERBB4. Post-translationally, proteolytic cleavage close to the plasma membrane on the external face leads to the release of the soluble growth factor form. Extensive glycosylation precedes the proteolytic cleavage. In terms of tissue distribution, expressed in most parts of the brain, especially the olfactory bulb and cerebellum where it localizes in granule and Purkinje cells. In the hippocampus, found in the granule cells of the dentate gyrus. In the basal forebrain, found in the cholinergic cells. In the hindbrain, weakly detectable in the motor trigeminal nucleus. Not detected in the hypothalamus. Also found in the liver and in the thymus. Not detected in heart, adrenal gland, or testis.

The protein resides in the cell membrane. Its subcellular location is the secreted. Its function is as follows. Direct ligand for ERBB3 and ERBB4 tyrosine kinase receptors. Concomitantly recruits ERBB1 and ERBB2 coreceptors, resulting in ligand-stimulated tyrosine phosphorylation and activation of the ERBB receptors. May also promote the heterodimerization with the EGF receptor. This chain is Pro-neuregulin-2, membrane-bound isoform (Nrg2), found in Rattus norvegicus (Rat).